The chain runs to 444 residues: S-locus-specific glycoprotein BS29-1 (444 aa).

The signal sequence occupies residues 1-28 (MRGVIPNYHHSYTLLFFVILVLFPHVFS). The 129-residue stretch at 31-159 (TLSPNEALTI…KTTALDRFMW (129 aa)) folds into the Bulb-type lectin domain. Residues Asn-43, Asn-125, Asn-180, Asn-243, and Asn-396 are each glycosylated (N-linked (GlcNAc...) asparagine). One can recognise a PAN domain in the interval 356 to 437 (CGEGDGFLRM…GGQDLYLKVA (82 aa)). 2 cysteine pairs are disulfide-bonded: Cys-387/Cys-412 and Cys-395/Cys-397.

Stigma.

Its function is as follows. Involved in sporophytic self-incompatibility system (the inability of flowering plants to achieve self-fertilization). The sequence is that of S-locus-specific glycoprotein BS29-1 (SLSG) from Brassica oleracea var. alboglabra (Chinese kale).